Reading from the N-terminus, the 274-residue chain is Thiamine kinase (274 aa).

Belongs to the thiamine kinase family.

It carries out the reaction thiamine + ATP = thiamine phosphate + ADP + H(+). Its pathway is cofactor biosynthesis; thiamine diphosphate biosynthesis; thiamine phosphate from thiamine: step 1/1. Catalyzes the ATP-dependent phosphorylation of thiamine to thiamine phosphate. Is involved in thiamine salvage. This is Thiamine kinase from Salmonella typhi.